A 153-amino-acid polypeptide reads, in one-letter code: UPF0260 protein YcgN (153 aa).

The protein belongs to the UPF0260 family.

The chain is UPF0260 protein YcgN from Salmonella typhi.